A 287-amino-acid polypeptide reads, in one-letter code: Diphthine methyl ester synthase (287 aa).

S-adenosyl-L-methionine-binding positions include leucine 9, aspartate 84, glycine 87, 112-113 (SI), leucine 163, valine 221, and histidine 248.

Belongs to the diphthine synthase family.

The protein localises to the cytoplasm. It catalyses the reaction 2-[(3S)-amino-3-carboxypropyl]-L-histidyl-[translation elongation factor 2] + 4 S-adenosyl-L-methionine = diphthine methyl ester-[translation elongation factor 2] + 4 S-adenosyl-L-homocysteine + 3 H(+). It functions in the pathway protein modification; peptidyl-diphthamide biosynthesis. In terms of biological role, S-adenosyl-L-methionine-dependent methyltransferase that catalyzes four methylations of the modified target histidine residue in translation elongation factor 2 (EF-2), to form an intermediate called diphthine methyl ester. The four successive methylation reactions represent the second step of diphthamide biosynthesis. The sequence is that of Diphthine methyl ester synthase (dph-5) from Neurospora crassa (strain ATCC 24698 / 74-OR23-1A / CBS 708.71 / DSM 1257 / FGSC 987).